Consider the following 282-residue polypeptide: NADPH-dependent 7-cyano-7-deazaguanine reductase (282 aa).

Isoleucine 88–serine 90 contacts substrate. NADPH is bound at residue serine 90–lysine 91. Cysteine 189 serves as the catalytic Thioimide intermediate. Catalysis depends on aspartate 196, which acts as the Proton donor. Residue histidine 228–glutamate 229 coordinates substrate. Arginine 257 to glycine 258 provides a ligand contact to NADPH.

This sequence belongs to the GTP cyclohydrolase I family. QueF type 2 subfamily. As to quaternary structure, homodimer.

It localises to the cytoplasm. It catalyses the reaction 7-aminomethyl-7-carbaguanine + 2 NADP(+) = 7-cyano-7-deazaguanine + 2 NADPH + 3 H(+). Its pathway is tRNA modification; tRNA-queuosine biosynthesis. Its function is as follows. Catalyzes the NADPH-dependent reduction of 7-cyano-7-deazaguanine (preQ0) to 7-aminomethyl-7-deazaguanine (preQ1). The chain is NADPH-dependent 7-cyano-7-deazaguanine reductase from Photorhabdus laumondii subsp. laumondii (strain DSM 15139 / CIP 105565 / TT01) (Photorhabdus luminescens subsp. laumondii).